Consider the following 238-residue polypeptide: Endonuclease V (238 aa).

Residues Asp-46 and Asp-116 each coordinate Mg(2+).

This sequence belongs to the endonuclease V family. It depends on Mg(2+) as a cofactor.

The protein resides in the cytoplasm. The catalysed reaction is Endonucleolytic cleavage at apurinic or apyrimidinic sites to products with a 5'-phosphate.. Its function is as follows. DNA repair enzyme involved in the repair of deaminated bases. Selectively cleaves double-stranded DNA at the second phosphodiester bond 3' to a deoxyinosine leaving behind the intact lesion on the nicked DNA. This Bacillus subtilis (strain 168) protein is Endonuclease V.